A 423-amino-acid chain; its full sequence is Peroxisomal membrane protein PMP47A (423 aa).

Solcar repeat units lie at residues 6–120 (YDDL…TGKT), 142–230 (LSVW…LKSF), and 239–373 (ITPV…LLIL). The helical transmembrane segment at 12-32 (AFAGAGGGLLSMTLTYPLVTL) threads the bilayer. Over residues 43–53 (KKDQEKEKENS) the composition is skewed to basic and acidic residues. Residues 43-70 (KKDQEKEKENSNEDGSLSPKSSNTSDVS) are disordered. Over residues 55–70 (EDGSLSPKSSNTSDVS) the composition is skewed to polar residues. 4 consecutive transmembrane segments (helical) span residues 98–118 (SALF…ELTG), 148–168 (MAAG…IWVA), 204–224 (FTGI…YTIF), and 245–265 (LLLG…YITL). The tract at residues 278–308 (SEDVEKERTDSVQSLPEDGSDEDNLKENSAK) is disordered. The chain crosses the membrane as a helical span at residues 353-373 (LLQSILNAAFLFYFKEELLIL).

Belongs to the mitochondrial carrier (TC 2.A.29) family.

The protein localises to the peroxisome membrane. In terms of biological role, may have transport activity. In Candida boidinii (Yeast), this protein is Peroxisomal membrane protein PMP47A (PMP47A).